We begin with the raw amino-acid sequence, 459 residues long: tRNA modification GTPase MnmE (459 aa).

Residues arginine 22, glutamate 85, and arginine 124 each contribute to the (6S)-5-formyl-5,6,7,8-tetrahydrofolate site. Residues 221–380 (GLSTVIVGKP…LEIQIRDLFF (160 aa)) form the TrmE-type G domain. A K(+)-binding site is contributed by asparagine 231. GTP contacts are provided by residues 231–236 (NVGKSS), 250–256 (TEVAGTT), and 275–278 (DTAG). Residue serine 235 participates in Mg(2+) binding. K(+)-binding residues include threonine 250, valine 252, and threonine 255. Threonine 256 is a Mg(2+) binding site. Lysine 459 serves as a coordination point for (6S)-5-formyl-5,6,7,8-tetrahydrofolate.

Belongs to the TRAFAC class TrmE-Era-EngA-EngB-Septin-like GTPase superfamily. TrmE GTPase family. As to quaternary structure, homodimer. Heterotetramer of two MnmE and two MnmG subunits. K(+) serves as cofactor.

Its subcellular location is the cytoplasm. Its function is as follows. Exhibits a very high intrinsic GTPase hydrolysis rate. Involved in the addition of a carboxymethylaminomethyl (cmnm) group at the wobble position (U34) of certain tRNAs, forming tRNA-cmnm(5)s(2)U34. The sequence is that of tRNA modification GTPase MnmE from Staphylococcus aureus (strain Mu3 / ATCC 700698).